The following is a 153-amino-acid chain: CRIB domain-containing protein RIC4 (153 aa).

In terms of domain architecture, CRIB spans 99–112 (IGVPTNVKHVSHIG).

Interacts with ARAC4/ROP2 and ARAC11/ROP1. Expressed in roots, leaves, stems, flowers, siliques and pollen.

It localises to the cell membrane. Functions as a downstream effector of Rho-related GTP binding proteins of the 'Rho of Plants' (ROPs) family. Participates in the propagation of ROP GTPase signals in specific cellular responses. Required for actin cortical microfilament assembly. Activated by ARAC4/ROP2 to promote the assembly of cortical actin microfilaments required for lobe formation and lateral expansion of pavement cells. Interaction with, and activation by ARAC4/ROP2 is inhibited by RIC1. Functions as a downstream effector of ARAC11/ROP1 to promote the assembly of apical F-actin associated with vesicle accumulation in the tip of the growing pollen tube. Counteracts the ARAC11/ROP1-RIC3 pathway, which activates calcium signaling that leads to apical F-actin disassembly associated with exocytosis, to control actin dynamics and pollen tube apical growth. Downstream of ARAC11/ROP1, is involved in the growth responses to the root-colonizing endophytic fungus P.indica. The sequence is that of CRIB domain-containing protein RIC4 (RIC4) from Arabidopsis thaliana (Mouse-ear cress).